The chain runs to 114 residues: Hydrogenase maturation factor HypA (114 aa).

His-2 lines the Ni(2+) pocket. The Zn(2+) site is built by Cys-70, Cys-73, Cys-86, and Cys-89.

It belongs to the HypA/HybF family.

In terms of biological role, involved in the maturation of [NiFe] hydrogenases. Required for nickel insertion into the metal center of the hydrogenase. The protein is Hydrogenase maturation factor HypA of Trichodesmium erythraeum (strain IMS101).